The primary structure comprises 485 residues: MANLATGEKLKNFIGGQWVESDSGKTEAVPNPATGEILAHVPISNREDLDRAVSVAKEAFKTWGKTPVPRRARVLFKYQQLLVENWEELARLVTLENGKSYKEAYGEVQRGIECVEFAAGAPSLMMGKQLPDIATNIESGMYRYPIGVVGGITPFNFPMMVPCWMFPLAIACGNTFVLKPSERTPLLANRLAELFTEAGLPEGVLNIVHGAHDVVNGLLEHPDVKAISFVGSQPVAEYVYKTASQHGKRVQALAGAKNHSIVMPDADLDGAVNQIVNAAYGSAGERCMAAAVVVAVGEVAEPLMEKLQKAVNEITIGNGLDDDVFLGPVIRESHKQKTENYIELGEKEGATLVRDGRKDNVSKDGYFLGPTLFDNVTTEMTIWKEEIFAPVLSVVRVESLDEAIQLTNQSEFANGACLYTTNGSSVRKFREEIDAGMLGINLGVPAPMAFFPFSGWKNSFYGDLHANGTDGVEFYTRKKMITARW.

Positions 155, 179, 182, 183, and 232 each coordinate NAD(+). The active-site Nucleophile is the Cys-287. An NAD(+)-binding site is contributed by Glu-386.

This sequence belongs to the aldehyde dehydrogenase family. IolA subfamily. As to quaternary structure, homotetramer.

It catalyses the reaction 3-oxopropanoate + NAD(+) + CoA + H2O = hydrogencarbonate + acetyl-CoA + NADH + H(+). The enzyme catalyses 2-methyl-3-oxopropanoate + NAD(+) + CoA + H2O = propanoyl-CoA + hydrogencarbonate + NADH + H(+). Its pathway is polyol metabolism; myo-inositol degradation into acetyl-CoA; acetyl-CoA from myo-inositol: step 7/7. Catalyzes the oxidation of malonate semialdehyde (MSA) and methylmalonate semialdehyde (MMSA) into acetyl-CoA and propanoyl-CoA, respectively. Is involved in a myo-inositol catabolic pathway. Bicarbonate, and not CO2, is the end-product of the enzymatic reaction. The polypeptide is Malonate-semialdehyde dehydrogenase (Halalkalibacterium halodurans (strain ATCC BAA-125 / DSM 18197 / FERM 7344 / JCM 9153 / C-125) (Bacillus halodurans)).